The chain runs to 91 residues: Small ribosomal subunit protein uS15 (91 aa).

It belongs to the universal ribosomal protein uS15 family. As to quaternary structure, part of the 30S ribosomal subunit. Forms a bridge to the 50S subunit in the 70S ribosome, contacting the 23S rRNA.

Functionally, one of the primary rRNA binding proteins, it binds directly to 16S rRNA where it helps nucleate assembly of the platform of the 30S subunit by binding and bridging several RNA helices of the 16S rRNA. Forms an intersubunit bridge (bridge B4) with the 23S rRNA of the 50S subunit in the ribosome. The chain is Small ribosomal subunit protein uS15 from Rickettsia felis (strain ATCC VR-1525 / URRWXCal2) (Rickettsia azadi).